Consider the following 240-residue polypeptide: MTATRRVSRPGPVRWMFYLGAVVAIAWLATQAFYFAQIAVWNYVNPRTTSFMRSDAWRLSQDRPDLSVQHTWVPYDQISRNLKRAIIASEDANFVNNNGYETDAILQAWERNKAKGKIVRGGSTITQQLARNLFLSREKSYIRKGQELIITWMLETLMDKERIFEIYLNSVEWGNGVYGAEAAAHYYFKTSASKLTAAQSARLAVMLPQPKYFDEHRGSPYLAQRSRVIARRMGAAELPD.

A helical membrane pass occupies residues 15–35 (WMFYLGAVVAIAWLATQAFYF).

It belongs to the glycosyltransferase 51 family.

It localises to the cell inner membrane. The enzyme catalyses [GlcNAc-(1-&gt;4)-Mur2Ac(oyl-L-Ala-gamma-D-Glu-L-Lys-D-Ala-D-Ala)](n)-di-trans,octa-cis-undecaprenyl diphosphate + beta-D-GlcNAc-(1-&gt;4)-Mur2Ac(oyl-L-Ala-gamma-D-Glu-L-Lys-D-Ala-D-Ala)-di-trans,octa-cis-undecaprenyl diphosphate = [GlcNAc-(1-&gt;4)-Mur2Ac(oyl-L-Ala-gamma-D-Glu-L-Lys-D-Ala-D-Ala)](n+1)-di-trans,octa-cis-undecaprenyl diphosphate + di-trans,octa-cis-undecaprenyl diphosphate + H(+). It functions in the pathway cell wall biogenesis; peptidoglycan biosynthesis. Its function is as follows. Peptidoglycan polymerase that catalyzes glycan chain elongation from lipid-linked precursors. The sequence is that of Biosynthetic peptidoglycan transglycosylase from Paraburkholderia xenovorans (strain LB400).